The primary structure comprises 259 residues: Pyrroloquinoline-quinone synthase (259 aa).

The protein belongs to the PqqC family.

It catalyses the reaction 6-(2-amino-2-carboxyethyl)-7,8-dioxo-1,2,3,4,7,8-hexahydroquinoline-2,4-dicarboxylate + 3 O2 = pyrroloquinoline quinone + 2 H2O2 + 2 H2O + H(+). Its pathway is cofactor biosynthesis; pyrroloquinoline quinone biosynthesis. In terms of biological role, ring cyclization and eight-electron oxidation of 3a-(2-amino-2-carboxyethyl)-4,5-dioxo-4,5,6,7,8,9-hexahydroquinoline-7,9-dicarboxylic-acid to PQQ. The protein is Pyrroloquinoline-quinone synthase of Bradyrhizobium diazoefficiens (strain JCM 10833 / BCRC 13528 / IAM 13628 / NBRC 14792 / USDA 110).